Here is a 207-residue protein sequence, read N- to C-terminus: Protein-L-isoaspartate O-methyltransferase (207 aa).

Residue S56 is part of the active site.

It belongs to the methyltransferase superfamily. L-isoaspartyl/D-aspartyl protein methyltransferase family.

Its subcellular location is the cytoplasm. The enzyme catalyses [protein]-L-isoaspartate + S-adenosyl-L-methionine = [protein]-L-isoaspartate alpha-methyl ester + S-adenosyl-L-homocysteine. Catalyzes the methyl esterification of L-isoaspartyl residues in peptides and proteins that result from spontaneous decomposition of normal L-aspartyl and L-asparaginyl residues. It plays a role in the repair and/or degradation of damaged proteins. The polypeptide is Protein-L-isoaspartate O-methyltransferase (Pyrobaculum islandicum (strain DSM 4184 / JCM 9189 / GEO3)).